Consider the following 832-residue polypeptide: Sodium/hydrogen exchanger 3 (832 aa).

The first 29 residues, 1 to 29 (MSGRGGCGPCWGLLLALVLALGALPWTQG), serve as a signal peptide directing secretion. Topologically, residues 30 to 50 (AEQEHHDEIQGFQIVTFKWHH) are extracellular. The chain crosses the membrane as a helical span at residues 51-73 (VQDPYIIALWVLVASLAKIVFHL). Over 74–81 (SHKVTSVV) the chain is Cytoplasmic. Residues 82–101 (PESALLIVLGLVLGGIVLAA) form a helical membrane-spanning segment. Over 102-110 (DHIASFTLT) the chain is Extracellular. Residues 111–128 (PTVFFFYLLPPIVLDAGY) form a helical membrane-spanning segment. Residues 129–131 (FMP) lie on the Cytoplasmic side of the membrane. Residues 132-167 (NRLFFSNLGSILLYAVVGTVWNAATTGLSLYGVFLS) form a helical membrane-spanning segment. Positions 140 and 141 each coordinate a 1,2-diacyl-sn-glycero-3-phospho-(1D-myo-inositol). Over 168–180 (GIMGELKIGLLDF) the chain is Extracellular. Residues 181-202 (LLFGSLIAAVDPVAVLAVFEEV) traverse the membrane as a helical segment. The Cytoplasmic segment spans residues 203-204 (HV). A helical transmembrane segment spans residues 205 to 236 (NEVLFIIVFGESLLNDAVTVVLYNVFQSFVTL). The Extracellular portion of the chain corresponds to 237–243 (GGDKVTG). Residues 244–278 (VDCVKGIVSFFVVSLGGTLVGVVFAFLLSLVTRFT) form a helical membrane-spanning segment. Residues 279 to 280 (KH) are Cytoplasmic-facing. A helical transmembrane segment spans residues 281 to 303 (VRVIEPGFVFIISYLSYLTSEML). Over 304 to 305 (SL) the chain is Extracellular. A helical membrane pass occupies residues 306-322 (SSILAITFCGICCQKYV). Residues 323 to 329 (KANISEQ) are Cytoplasmic-facing. The chain crosses the membrane as a helical span at residues 330 to 358 (SATTVRYTMKMLASGAETIIFMFLGISAV). At 359–366 (DPLIWTWN) the chain is on the extracellular side. The helical transmembrane segment at 367–388 (TAFVLLTLLFVSVFRAIGVVLQ) threads the bilayer. Over 389–401 (TWLLNRYRMVQLE) the chain is Cytoplasmic. Residue methionine 397 coordinates a 1,2-diacyl-sn-glycero-3-phospho-(1D-myo-inositol). A helical transmembrane segment spans residues 402–425 (LIDQVVMSYGGLRGAVAFALVALL). Residues 426 to 432 (DGNKVKE) lie on the Extracellular side of the membrane. A helical transmembrane segment spans residues 433 to 466 (KNLFVSTTIIVVFFTVIFQGLTIKPLVQWLKVKR). The Cytoplasmic segment spans residues 467-832 (SEHREPKLNE…GAEHPESTHM (366 aa)). Residues glutamine 496, isoleucine 497, and histidine 499 each coordinate a 1,2-diacyl-sn-glycero-3-phospho-(1D-myo-inositol). Phosphoserine is present on residues serine 554 and serine 562. The segment at 575–589 (RPSTVEASVSYLLRE) is interaction with EZR. Residues 590–667 (SASAVCLDMQ…RKRLESFKSA (78 aa)) are interaction with NHERF4. Residues 591–696 (ASAVCLDMQS…AQKRRNSSVP (106 aa)) are interaction with AHCYL1. Phosphoserine occurs at positions 592 and 607. Phosphoserine; by SGK1 is present on serine 663. Residues 664–706 (FKSAKLGLGQSKKATKHKRERERAQKRRNSSVPNGKLPLDSPA) form a disordered region. Residues 676 to 692 (KATKHKRERERAQKRRN) are compositionally biased toward basic residues. 3 positions are modified to phosphoserine: serine 719, serine 813, and serine 816.

The protein belongs to the monovalent cation:proton antiporter 1 (CPA1) transporter (TC 2.A.36) family. As to quaternary structure, homodimer. Found in the forms of complex and dynamic macromolecular complexes. Interacts with CHP1; this interaction increases trafficking and activity at the plasma membrane of SLC9A3. Interacts with CHP2 and SHANK2. Interacts with NHERF4 and interaction decreases in response to elevated calcium ion levels. Binds NHERF1 and NHERF2. Interacts with PDZK1 (via C-terminal PDZ domain). Interacts with AHCYL1; interaction is required for SLC9A3 activity. Interacts with EZR; interaction targets SLC9A3 to the apical membrane. Interacts with SNX27 (via PDZ domains); directs SLC9A3 membrane insertion from early endosomes to the plasma membrane. In terms of processing, phosphorylated by PKA, which inhibits activity. Phosphorylation at Ser-663 by SGK1 is associated with increased abundance at the cell membrane and activity. Phosphorylation at Ser-719 by CSNK2A1 regulates SLC9A3 activity through the formation of multiple signaling complexes. As to expression, intestinal and kidney specific. Most abundant in kidney cortex, followed equally by ileum and ascending colon, then kidney medulla and jejunum. Is absent from duodenum and descending colon.

Its subcellular location is the apical cell membrane. It is found in the cell membrane. The protein resides in the recycling endosome membrane. The protein localises to the early endosome membrane. It carries out the reaction Na(+)(in) + H(+)(out) = Na(+)(out) + H(+)(in). Its activity is regulated as follows. Seems to switch between active and inactive modes in response to various stimuli. Activated directly or indirectly by membrane phosphatidylinositol (PIs). Regulated by a variety of auxiliary proteins, which facilitate the maturation, cell surface expression and function of the transporter. Inhibited specifically by the drug tenapanor. Functionally, plasma membrane Na(+)/H(+) antiporter. Exchanges intracellular H(+) ions for extracellular Na(+) in 1:1 stoichiometry, playing a key role in salt and fluid absorption and pH homeostasis. Major apical Na(+)/H(+) exchanger in kidney and intestine playing an important role in renal and intestine Na(+) absorption and blood pressure regulation. This is Sodium/hydrogen exchanger 3 (SLC9A3) from Oryctolagus cuniculus (Rabbit).